The chain runs to 144 residues: Transcription antitermination protein NusB (144 aa).

Belongs to the NusB family.

Its function is as follows. Involved in transcription antitermination. Required for transcription of ribosomal RNA (rRNA) genes. Binds specifically to the boxA antiterminator sequence of the ribosomal RNA (rrn) operons. This chain is Transcription antitermination protein NusB, found in Streptococcus agalactiae serotype Ia (strain ATCC 27591 / A909 / CDC SS700).